The following is a 130-amino-acid chain: Small ribosomal subunit protein uS11 (130 aa).

This sequence belongs to the universal ribosomal protein uS11 family. As to quaternary structure, part of the 30S ribosomal subunit. Interacts with proteins S7 and S18. Binds to IF-3.

In terms of biological role, located on the platform of the 30S subunit, it bridges several disparate RNA helices of the 16S rRNA. Forms part of the Shine-Dalgarno cleft in the 70S ribosome. The protein is Small ribosomal subunit protein uS11 of Shewanella halifaxensis (strain HAW-EB4).